Here is a 545-residue protein sequence, read N- to C-terminus: Delta 8-(E)-sphingolipid desaturase (545 aa).

Residues 1–82 (MASHTKDALL…MLAFQIGRIQ (82 aa)) enclose the Cytochrome b5 heme-binding domain. 2 residues coordinate heme: H42 and H65. Positions 97–124 (FRHYDENADSEEDDTSGQSQPPSPIFDA) are disordered. The helical transmembrane segment at 227–247 (LGWYSVSAVFLGCFWHQLVFS) threads the bilayer. The Histidine box-1 signature appears at 249–253 (HDAGH). The chain crosses the membrane as a helical span at residues 262–282 (VDSIIGILIADFLGGLSLGWW). A Histidine box-2 motif is present at residues 286–290 (HNVHH). The next 2 membrane-spanning stretches (helical) occupy residues 382–402 (IAGQ…CSIP) and 408–428 (LSFL…ITLS). Residues 470–474 (QAIHH) carry the Histidine box-3 motif.

The protein belongs to the fatty acid desaturase type 1 family.

It is found in the membrane. The catalysed reaction is an N-acylsphing-4-enine + 2 Fe(II)-[cytochrome b5] + O2 + 2 H(+) = a (4E,8E)-4-sphinga-4,8-dienine ceramide + 2 Fe(III)-[cytochrome b5] + 2 H2O. The protein operates within lipid metabolism; sphingolipid metabolism. Functionally, delta(8)-fatty-acid desaturase which introduces a double bond at the 8-position in the long-chain base (LCB) of ceramides. Required for the formation of the di-unsaturated sphingoid base (E,E)-sphinga-4,8-dienine during glucosylceramide (GluCer) biosynthesis. Plays an important role in conidiation. This chain is Delta 8-(E)-sphingolipid desaturase, found in Emericella nidulans (strain FGSC A4 / ATCC 38163 / CBS 112.46 / NRRL 194 / M139) (Aspergillus nidulans).